The following is a 465-amino-acid chain: Fujikurins efflux protein FFUJ_12242 (465 aa).

Positions 1–66 (MATNVGGAVD…AAKAHDEGPP (66 aa)) are disordered. Basic and acidic residues predominate over residues 11 to 28 (NSRRSISDNRHDPEKPAE). Transmembrane regions (helical) follow at residues 70–90 (TAAW…PGWI), 115–135 (WIPS…GIIF), 142–162 (PLII…SLAK), 175–195 (SAIG…TWFL), 200–220 (AAMG…PIMI), 231–251 (WALR…CLTV), and 274–294 (PAFA…YIPI). Asparagine 310 is a glycosylation site (N-linked (GlcNAc...) asparagine). A run of 5 helical transmembrane segments spans residues 314–334 (YLVA…GYGA), 342–362 (MFII…IPAT), 368–388 (IGYA…VGAL), 404–424 (IVFL…GAIL), and 430–450 (GWVS…AIIL).

This sequence belongs to the major facilitator superfamily. Monocarboxylate porter (TC 2.A.1.13) family.

The protein resides in the cell membrane. In terms of biological role, efflux pump that may be involved in the secretion of fujikurins. The chain is Fujikurins efflux protein FFUJ_12242 from Gibberella fujikuroi (strain CBS 195.34 / IMI 58289 / NRRL A-6831) (Bakanae and foot rot disease fungus).